Reading from the N-terminus, the 246-residue chain is Neurotrophic factor BDNF precursor form (246 aa).

The first 18 residues, 1-18 (MTILFLTMVISYLSCMKA), serve as a signal peptide directing secretion. A propeptide spanning residues 19–127 (TPMKEVSIRG…AANMSMRVRR (109 aa)) is cleaved from the precursor. N120 carries N-linked (GlcNAc...) asparagine glycosylation. 3 disulfide bridges follow: C140/C207, C185/C236, and C195/C238.

This sequence belongs to the NGF-beta family.

The protein localises to the secreted. Its function is as follows. Promotes the survival of neuronal populations that are all located either in the central nervous system or directly connected to it. In Ptyas major (Chinese green snake), this protein is Neurotrophic factor BDNF precursor form (BDNF).